The following is a 1755-amino-acid chain: Transposon Ty1-MR2 Gag-Pol polyprotein (1755 aa).

Polar residues-rich tracts occupy residues 1-10, 48-60, and 127-152; these read MESQQLSNYP, TKAN…TPAS, and QSQF…GNTF. 3 disordered regions span residues 1-93, 126-173, and 352-421; these read MESQ…MMTQ, PQSQ…RPPP, and GSRN…SKST. Positions 153-165 are enriched in low complexity; the sequence is TDSSSADSDMTST. Residues 299 to 401 are RNA-binding; that stretch reads NNGIHINNKV…NSKSKTARAH (103 aa). Positions 402-418 are enriched in low complexity; that stretch reads NVSTSNNSPSTDNDSIS. Ser-416 is modified (phosphoserine). Asp-461 serves as the catalytic For protease activity; shared with dimeric partner. Residues 583-640 form an integrase-type zinc finger-like region; that stretch reads NVHTSESTRKYPYPFIHRMLAHANAQTIRYSLKNNTITYFNESDVDWSSAIDYQCPDC. The Integrase catalytic domain occupies 660–835; that stretch reads NSYEPFQYLH…AGLDISTLLP (176 aa). Mg(2+) contacts are provided by Asp-671 and Asp-736. 3 disordered regions span residues 956 to 1087, 1092 to 1111, and 1130 to 1186; these read SKAV…ETEK, RSPS…NIVP, and DLPL…EDNE. Residues 960-969 are compositionally biased toward low complexity; sequence SPTDSTPPST. Polar residues predominate over residues 1005 to 1015; sequence STPQISNIEST. Residues 1038–1053 show a composition bias toward basic and acidic residues; it reads ESSHASKSKDFRHSDS. Composition is skewed to polar residues over residues 1054-1082 and 1101-1111; these read YSEN…QISD and PENNSSHNIVP. The Bipartite nuclear localization signal motif lies at 1178–1212; that stretch reads KKRSLEDNETEIKVSRDTWNTKNMRSLEPPRSKKR. A Reverse transcriptase Ty1/copia-type domain is found at 1338 to 1476; that stretch reads NNYYITQLDI…DILGLEIKYQ (139 aa). Mg(2+) is bound by residues Asp-1346, Asp-1427, Asp-1428, Asp-1610, Glu-1652, and Asp-1685. In terms of domain architecture, RNase H Ty1/copia-type spans 1610 to 1752; the sequence is DASYGNQPYY…IKTFKLLTNK (143 aa).

In terms of assembly, the capsid protein forms a homotrimer, from which the VLPs are assembled. The protease is a homodimer, whose active site consists of two apposed aspartic acid residues. Initially, virus-like particles (VLPs) are composed of the structural unprocessed proteins Gag and Gag-Pol, and also contain the host initiator methionine tRNA (tRNA(i)-Met) which serves as a primer for minus-strand DNA synthesis, and a dimer of genomic Ty RNA. Processing of the polyproteins occurs within the particle and proceeds by an ordered pathway, called maturation. First, the protease (PR) is released by autocatalytic cleavage of the Gag-Pol polyprotein yielding capsid protein p45 and a Pol-p154 precursor protein. This cleavage is a prerequisite for subsequent processing of Pol-p154 at the remaining sites to release the mature structural and catalytic proteins. Maturation takes place prior to the RT reaction and is required to produce transposition-competent VLPs.

The protein localises to the cytoplasm. It is found in the nucleus. The enzyme catalyses DNA(n) + a 2'-deoxyribonucleoside 5'-triphosphate = DNA(n+1) + diphosphate. It catalyses the reaction Endonucleolytic cleavage to 5'-phosphomonoester.. In terms of biological role, capsid protein (CA) is the structural component of the virus-like particle (VLP), forming the shell that encapsulates the retrotransposons dimeric RNA genome. The particles are assembled from trimer-clustered units and there are holes in the capsid shells that allow for the diffusion of macromolecules. CA also has nucleocapsid-like chaperone activity, promoting primer tRNA(i)-Met annealing to the multipartite primer-binding site (PBS), dimerization of Ty1 RNA and initiation of reverse transcription. The aspartyl protease (PR) mediates the proteolytic cleavages of the Gag and Gag-Pol polyproteins after assembly of the VLP. Functionally, reverse transcriptase/ribonuclease H (RT) is a multifunctional enzyme that catalyzes the conversion of the retro-elements RNA genome into dsDNA within the VLP. The enzyme displays a DNA polymerase activity that can copy either DNA or RNA templates, and a ribonuclease H (RNase H) activity that cleaves the RNA strand of RNA-DNA heteroduplexes during plus-strand synthesis and hydrolyzes RNA primers. The conversion leads to a linear dsDNA copy of the retrotransposon that includes long terminal repeats (LTRs) at both ends. Its function is as follows. Integrase (IN) targets the VLP to the nucleus, where a subparticle preintegration complex (PIC) containing at least integrase and the newly synthesized dsDNA copy of the retrotransposon must transit the nuclear membrane. Once in the nucleus, integrase performs the integration of the dsDNA into the host genome. In Saccharomyces cerevisiae (strain ATCC 204508 / S288c) (Baker's yeast), this protein is Transposon Ty1-MR2 Gag-Pol polyprotein (TY1B-MR2).